Reading from the N-terminus, the 256-residue chain is Proteasome subunit alpha-type 8 (256 aa).

Belongs to the peptidase T1A family. As to quaternary structure, component of the outer alpha-ring of the 20S proteasome core which is composed of 28 subunits that are arranged in four stacked rings, resulting in a barrel-shaped structure. The catalytic chamber with the active sites is on the inside of the barrel. Interacts with canonical subunits of the spermatoproteasome, including proteasome activators PSME4 (also called PA200) and PSME3 (also called PA28-gamma). Interacts with proteasome-interacting proteins chaperones, ubiquitin ligases and ubiquitin specific proteases. Interacts with meiotic proteins cyclin dependent kinase CDK1 and the ATPase TRIP13 as well as proteins of the synaptonemal complex SIX6OS1 and SYCE3.

The protein localises to the nucleus. In terms of biological role, component of the spermatoproteasome, a proteasome specifically found in testis that promotes acetylation-dependent degradation of histones, thereby participating actively to the exchange of histones during spermatogenesis. The proteasome is a protein complex that degrades unneeded or damaged proteins by proteolysis, a chemical reaction that breaks peptide bonds. Required for 20S core proteasome assembly, essential for the degradation of meiotic proteins RAD51 and RPA1 at late prophase I and the progression of meiosis I during spermatogenesis. Localizes to the synaptonemal complex, a 'zipper'-like structure that holds homologous chromosome pairs in synapsis during meiotic prophase I. The chain is Proteasome subunit alpha-type 8 (PSMA8) from Homo sapiens (Human).